A 484-amino-acid polypeptide reads, in one-letter code: Ubiquinone biosynthesis monooxygenase COQ6, mitochondrial (484 aa).

The N-terminal 41 residues, 1-41 (MLSLAKAKLAVVGIGRQCVAVRTLNGARAVHRSFSSSEHDQ), are a transit peptide targeting the mitochondrion.

The protein belongs to the UbiH/COQ6 family. As to quaternary structure, component of a multi-subunit COQ enzyme complex, composed of at least coq3, coq4, coq5, coq6, coq7 and coq9. Interacts with coq8b and coq7. Requires FAD as cofactor.

The protein localises to the mitochondrion inner membrane. It localises to the golgi apparatus. It is found in the cell projection. It catalyses the reaction a 4-hydroxy-3-(all-trans-polyprenyl)benzoate + 2 reduced [2Fe-2S]-[ferredoxin] + O2 + 2 H(+) = a 3,4-dihydroxy-5-(all-trans-polyprenyl)benzoate + 2 oxidized [2Fe-2S]-[ferredoxin] + H2O. It carries out the reaction a 2-methoxy-6-(all-trans-polyprenyl)phenol + 2 reduced [2Fe-2S]-[ferredoxin] + O2 + 2 H(+) = a 2-methoxy-6-(all-trans-polyprenyl)benzene-1,4-diol + 2 oxidized [2Fe-2S]-[ferredoxin] + H2O. It functions in the pathway cofactor biosynthesis; ubiquinone biosynthesis. In terms of biological role, FAD-dependent monooxygenase required for two non-consecutive steps during ubiquinone biosynthesis. Required for the C5-ring hydroxylation during ubiquinone biosynthesis by catalyzing the hydroxylation of 4-hydroxy-3-(all-trans-polyprenyl)benzoic acid to 3,4-dihydroxy-5-(all-trans-polyprenyl)benzoic acid. Also acts downstream of coq4, for the C1-hydroxylation during ubiquinone biosynthesis by catalyzing the hydroxylation of 2-methoxy-6-(all-trans-polyprenyl)phenol to 2-methoxy-6-(all-trans-polyprenyl)benzene-1,4-diol. The electrons required for the hydroxylation reaction are funneled indirectly to coq6 from NADPH via a ferredoxin/ferredoxin reductase system. This is Ubiquinone biosynthesis monooxygenase COQ6, mitochondrial from Danio rerio (Zebrafish).